The sequence spans 365 residues: Fructose-1,6-bisphosphatase class 1 2 (365 aa).

The Mg(2+) site is built by Glu-100, Asp-122, Leu-124, and Asp-125. Substrate contacts are provided by residues 125–128 (DGSS) and Asn-221. Glu-293 lines the Mg(2+) pocket.

It belongs to the FBPase class 1 family. As to quaternary structure, homotetramer. The cofactor is Mg(2+).

It localises to the cytoplasm. It catalyses the reaction beta-D-fructose 1,6-bisphosphate + H2O = beta-D-fructose 6-phosphate + phosphate. It functions in the pathway carbohydrate biosynthesis; gluconeogenesis. The chain is Fructose-1,6-bisphosphatase class 1 2 from Leptothrix cholodnii (strain ATCC 51168 / LMG 8142 / SP-6) (Leptothrix discophora (strain SP-6)).